The sequence spans 334 residues: Gap junction alpha-2 protein (334 aa).

Over 1–12 (MAGWELLKLLLD) the chain is Cytoplasmic. A helical transmembrane segment spans residues 13–35 (DVQEHSTLIGKVWLTVLFIFRIF). At 36 to 75 (ILSVAGESVWTDEQSDFICNTQQPGCTNVCYDQAFPISHV) the chain is on the extracellular side. The helical transmembrane segment at 76-98 (RYWVLQFLFVSTPTLIYLGHMVY) threads the bilayer. The Cytoplasmic segment spans residues 99–153 (LSKKEEKERQKENESRILVANEAQTEVHSSATKKIRIQGPLMCTYTTSVVFKSIF). A helical transmembrane segment spans residues 154–176 (EAGFLLGQWYIYGFVMSPIFVCE). Residues 177–207 (RIPCKHKVECFVSRPMEKTIFIIFMLVVSLI) lie on the Extracellular side of the membrane. A helical membrane pass occupies residues 208–230 (SLLLNLMELIHLSFKCFQHGIKE). Topologically, residues 231-334 (GATCSPTGIP…HQTSSKQQYV (104 aa)) are cytoplasmic.

Belongs to the connexin family. Alpha-type (group II) subfamily. In terms of assembly, a connexon is composed of a hexamer of connexins. In terms of tissue distribution, resides primarily in the ovary, oocytes and early embryos.

The protein resides in the cell membrane. The protein localises to the cell junction. It is found in the gap junction. In terms of biological role, one gap junction consists of a cluster of closely packed pairs of transmembrane channels, the connexons, through which materials of low MW diffuse from one cell to a neighboring cell. This is Gap junction alpha-2 protein (gja2) from Xenopus laevis (African clawed frog).